Reading from the N-terminus, the 477-residue chain is uncharacterized protein (477 aa).

The N-terminal stretch at methionine 1–serine 18 is a signal peptide. At histidine 19 to lysine 427 the chain is on the extracellular side. N-linked (GlcNAc...) asparagine glycosylation is found at asparagine 40, asparagine 51, and asparagine 77. 3 disordered regions span residues threonine 79 to aspartate 103, glycine 239 to proline 366, and lysine 378 to valine 398. Over residues threonine 85–threonine 97 the composition is skewed to low complexity. Composition is skewed to polar residues over residues proline 253 to histidine 288 and proline 298 to lysine 309. Asparagine 300 carries N-linked (GlcNAc...) asparagine glycosylation. 3 stretches are compositionally biased toward low complexity: residues serine 310–threonine 326, threonine 348–glutamine 361, and lysine 378–serine 393. The chain crosses the membrane as a helical span at residues methionine 428–phenylalanine 448. The Cytoplasmic segment spans residues alanine 449–methionine 477.

It localises to the cell membrane. Its subcellular location is the golgi apparatus. The protein resides in the trans-Golgi network membrane. This is an uncharacterized protein from Rattus norvegicus (Rat).